The chain runs to 481 residues: Dihydrolipoyl dehydrogenase (481 aa).

Residues 34-42 and Lys51 contribute to the FAD site; that span reads EREHMGGIC. Cys42 and Cys47 are oxidised to a cystine. NAD(+)-binding positions include 195 to 199, Glu218, and 284 to 287; these read GSGAI and AVGV. FAD is bound by residues Asp326 and Ala334. His460 functions as the Proton acceptor in the catalytic mechanism.

It belongs to the class-I pyridine nucleotide-disulfide oxidoreductase family. In terms of assembly, homodimer. The cofactor is FAD.

It localises to the cytoplasm. It carries out the reaction N(6)-[(R)-dihydrolipoyl]-L-lysyl-[protein] + NAD(+) = N(6)-[(R)-lipoyl]-L-lysyl-[protein] + NADH + H(+). Its function is as follows. Lipoamide dehydrogenase is a component of the alpha-ketoacid dehydrogenase complexes. In Rhizobium etli (strain ATCC 51251 / DSM 11541 / JCM 21823 / NBRC 15573 / CFN 42), this protein is Dihydrolipoyl dehydrogenase (lpdA).